Consider the following 223-residue polypeptide: ATP-dependent dethiobiotin synthetase BioD (223 aa).

Position 16 (Thr16) interacts with Mg(2+). The active site involves Lys37. Ser41 provides a ligand contact to substrate. 2 residues coordinate Mg(2+): Asp50 and Glu111. ATP is bound by residues Asp50, 111–114 (EGAG), and 171–172 (NR).

It belongs to the dethiobiotin synthetase family. In terms of assembly, homodimer. The cofactor is Mg(2+).

It localises to the cytoplasm. The enzyme catalyses (7R,8S)-7,8-diammoniononanoate + CO2 + ATP = (4R,5S)-dethiobiotin + ADP + phosphate + 3 H(+). It participates in cofactor biosynthesis; biotin biosynthesis; biotin from 7,8-diaminononanoate: step 1/2. Its function is as follows. Catalyzes a mechanistically unusual reaction, the ATP-dependent insertion of CO2 between the N7 and N8 nitrogen atoms of 7,8-diaminopelargonic acid (DAPA, also called 7,8-diammoniononanoate) to form a ureido ring. The chain is ATP-dependent dethiobiotin synthetase BioD from Anaeromyxobacter sp. (strain K).